The following is a 358-amino-acid chain: PDZ and LIM domain protein 3 (358 aa).

One can recognise a PDZ domain in the interval 1–84; that stretch reads MPQNVLLPGP…QLCLKIDRAE (84 aa). Disordered stretches follow at residues 126-155 and 237-274; these read FILP…SVST and DTEH…RAPV. Positions 129-146 are enriched in low complexity; it reads PGRSSGSSTPSGFDPGSG. The 60-residue stretch at 288–347 folds into the LIM zinc-binding domain; that stretch reads PICDRCGNGIVGTVVKAKDKLRHPDCFVCSDCNLNLKQKGYFFVEGQLYCEAHARARMRP.

It localises to the cytoplasm. The protein localises to the myofibril. The protein resides in the sarcomere. Its subcellular location is the z line. Functionally, may play a role in the organization of actin filament arrays within muscle cells. The polypeptide is PDZ and LIM domain protein 3 (pdlim3) (Xenopus laevis (African clawed frog)).